The sequence spans 362 residues: 11-beta-hydroxysteroid dehydrogenase B (362 aa).

The chain crosses the membrane as a helical; Signal-anchor for type II membrane protein span at residues F10–I30. Residues P13–T26 carry the Proline-knob motif. G55–R81 provides a ligand contact to NADP(+). S185 serves as a coordination point for substrate. Y198 serves as the catalytic Proton acceptor. NADP(+) is bound by residues Y198–K202 and K202. The disordered stretch occupies residues T321 to E362.

Belongs to the short-chain dehydrogenases/reductases (SDR) family. In terms of tissue distribution, expressed in seeds (at protein level). Not expressed in stem, leaf or root (at protein level).

The protein resides in the lipid droplet. Its subcellular location is the membrane. The catalysed reaction is an 11beta-hydroxysteroid + NADP(+) = an 11-oxosteroid + NADPH + H(+). It catalyses the reaction corticosterone + NADP(+) = 11-dehydrocorticosterone + NADPH + H(+). The enzyme catalyses 17beta-estradiol + NADP(+) = estrone + NADPH + H(+). In terms of biological role, has dehydrogenase activity against corticosterone (11 beta-hydroxysteroid) and estradiol (17 beta-hydroxysteroid), with similar activities to both sterols in the presence of NADP(+), but negligible activity to either sterol in the presence of NAD(+). May be involved in signal transduction regulated by various sterols. The sequence is that of 11-beta-hydroxysteroid dehydrogenase B from Sesamum indicum (Oriental sesame).